We begin with the raw amino-acid sequence, 260 residues long: Putative ABC transporter ATP-binding protein PYRAB01300 (260 aa).

The 233-residue stretch at isoleucine 2 to proline 234 folds into the ABC transporter domain. Glycine 34–threonine 41 lines the ATP pocket.

This sequence belongs to the ABC transporter superfamily.

The protein localises to the cell membrane. Functionally, probably part of an ABC transporter complex. Responsible for energy coupling to the transport system. This Pyrococcus abyssi (strain GE5 / Orsay) protein is Putative ABC transporter ATP-binding protein PYRAB01300.